Here is a 1061-residue protein sequence, read N- to C-terminus: Transmembrane protease serine 9 (1061 aa).

At 3-31 (PAAPDLQPVPEVTKGVPVPTPDSGCCRAA) the chain is on the cytoplasmic side. A helical membrane pass occupies residues 32–52 (VTTVVAISVASLTLGVLSAFL). The Extracellular segment spans residues 53-1061 (SAQGVQVEHT…LGWIGQNIRE (1009 aa)). The region spanning 155-192 (HCPGNAFSCQNSQCVSKENPECDDRVDCSDGSDEAQCD) is the LDL-receptor class A domain. 4 cysteine pairs are disulfide-bonded: cysteine 156–cysteine 168, cysteine 163–cysteine 182, cysteine 176–cysteine 191, and cysteine 230–cysteine 246. The region spanning 205-438 (IVGGAEAAPG…LRDWILEVTS (234 aa)) is the Peptidase S1 1 domain. Catalysis depends on charge relay system residues histidine 245 and aspartate 294. 3 cysteine pairs are disulfide-bonded: cysteine 328–cysteine 395, cysteine 360–cysteine 374, and cysteine 385–cysteine 414. The active-site Charge relay system is serine 389. The tract at residues 443–499 (PVVPTEAPAPITPSTPWPTSPESRVPNTTAKPTVAPTPAPLHPSTAAKPQECGARPA) is disordered. The span at 452–461 (PITPSTPWPT) shows a compositional bias: pro residues. The segment covering 462 to 476 (SPESRVPNTTAKPTV) has biased composition (low complexity). N-linked (GlcNAc...) asparagine glycosylation is present at asparagine 469. A Peptidase S1 2 domain is found at 506 to 738 (IVGGISAVSG…LKDWILKAMS (233 aa)). The cysteines at positions 531 and 547 are disulfide-linked. The active-site Charge relay system is histidine 546. Asparagine 549 is a glycosylation site (N-linked (GlcNAc...) asparagine). The Charge relay system role is filled by aspartate 594. Cystine bridges form between cysteine 628–cysteine 695, cysteine 660–cysteine 674, and cysteine 685–cysteine 714. N-linked (GlcNAc...) asparagine glycosylation is found at asparagine 640 and asparagine 665. Residue serine 689 is the Charge relay system of the active site. A compositionally biased stretch (low complexity) spans 740–752 (DPSSTAHPHTSST). Disordered regions lie at residues 740-771 (DPSS…IPEA) and 790-810 (LNTT…APGT). Asparagine 791 carries N-linked (GlcNAc...) asparagine glycosylation. Residues 792-808 (TTLSARSTTTRRQTPAP) show a composition bias toward low complexity. The Peptidase S1 3 domain maps to 830–1060 (IVGGSAASLG…VLGWIGQNIR (231 aa)). Disulfide bonds link cysteine 856/cysteine 872, cysteine 951/cysteine 1017, cysteine 982/cysteine 996, and cysteine 1007/cysteine 1036.

It belongs to the peptidase S1 family. In terms of processing, proteolytically cleaved to generate 3 independent serine protease chains. The cleaved chains may remain attached to the membrane thanks to disulfide bonds. It is unclear whether cleavage always takes place.

Its subcellular location is the cell membrane. Its activity is regulated as follows. Inhibited by serine protease inhibitors PMSF and 4-(2-aminoethyl)benzenesulfonyl fluoride, but not by EDTA. In terms of biological role, serase-1 and serase-2 are serine proteases that hydrolyze the peptides N-t-Boc-Gln-Ala-Arg-AMC and N-t-Boc-Gln-Gly-Arg-AMC. In contrast, N-t-Boc-Ala-Phe-Lys-AMC and N-t-Boc-Ala-Pro-Ala-AMC are not significantly hydrolyzed. The sequence is that of Transmembrane protease serine 9 (Tmprss9) from Rattus norvegicus (Rat).